Here is a 218-residue protein sequence, read N- to C-terminus: N-(5'-phosphoribosyl)anthranilate isomerase (218 aa).

The protein belongs to the TrpF family.

The catalysed reaction is N-(5-phospho-beta-D-ribosyl)anthranilate = 1-(2-carboxyphenylamino)-1-deoxy-D-ribulose 5-phosphate. The protein operates within amino-acid biosynthesis; L-tryptophan biosynthesis; L-tryptophan from chorismate: step 3/5. In Rhodospirillum rubrum (strain ATCC 11170 / ATH 1.1.1 / DSM 467 / LMG 4362 / NCIMB 8255 / S1), this protein is N-(5'-phosphoribosyl)anthranilate isomerase.